The sequence spans 386 residues: Phosphomevalonate dehydratase large subunit (386 aa).

Residues Gly48, Val49, Ser50, Asn53, Arg63, Asn79, and Pro80 each coordinate (R)-5-phosphomevalonate. Position 110 (Cys110) interacts with [4Fe-4S] cluster. Positions 129 and 130 each coordinate (R)-5-phosphomevalonate. Positions 283 and 342 each coordinate [4Fe-4S] cluster. A (R)-5-phosphomevalonate-binding site is contributed by Lys361.

This sequence belongs to the AcnX type II large subunit family. In terms of assembly, heterodimer composed of a large subunit (PMDh-L) and a small subunit (PMDh-S). Requires [4Fe-4S] cluster as cofactor.

The enzyme catalyses (R)-5-phosphomevalonate = (2E)-3-methyl-5-phosphooxypent-2-enoate + H2O. It functions in the pathway isoprenoid biosynthesis; isopentenyl diphosphate biosynthesis via mevalonate pathway. In terms of biological role, component of a hydro-lyase that catalyzes the dehydration of mevalonate 5-phosphate (MVA5P) to form trans-anhydromevalonate 5-phosphate (tAHMP). Involved in the archaeal mevalonate (MVA) pathway, which provides fundamental precursors for isoprenoid biosynthesis, such as isopentenyl diphosphate (IPP) and dimethylallyl diphosphate (DMAPP). This chain is Phosphomevalonate dehydratase large subunit, found in Thermococcus kodakarensis (strain ATCC BAA-918 / JCM 12380 / KOD1) (Pyrococcus kodakaraensis (strain KOD1)).